The sequence spans 509 residues: ATP synthase subunit alpha (509 aa).

169 to 176 contributes to the ATP binding site; sequence GDRQTGKT.

Belongs to the ATPase alpha/beta chains family. F-type ATPases have 2 components, CF(1) - the catalytic core - and CF(0) - the membrane proton channel. CF(1) has five subunits: alpha(3), beta(3), gamma(1), delta(1), epsilon(1). CF(0) has three main subunits: a(1), b(2) and c(9-12). The alpha and beta chains form an alternating ring which encloses part of the gamma chain. CF(1) is attached to CF(0) by a central stalk formed by the gamma and epsilon chains, while a peripheral stalk is formed by the delta and b chains.

The protein localises to the cell inner membrane. The enzyme catalyses ATP + H2O + 4 H(+)(in) = ADP + phosphate + 5 H(+)(out). Produces ATP from ADP in the presence of a proton gradient across the membrane. The alpha chain is a regulatory subunit. The polypeptide is ATP synthase subunit alpha (Sinorhizobium medicae (strain WSM419) (Ensifer medicae)).